Consider the following 234-residue polypeptide: Zein-alpha 19B1 (234 aa).

Positions 1 to 21 (MAAKIFCLLMLLGLSASAATA) are cleaved as a signal peptide.

It belongs to the zein family.

Its function is as follows. Zeins are major seed storage proteins. This chain is Zein-alpha 19B1, found in Zea mays (Maize).